We begin with the raw amino-acid sequence, 194 residues long: RNA pyrophosphohydrolase (194 aa).

Residues 6–149 (GFRPNVGIIL…KRDVYQRALQ (144 aa)) form the Nudix hydrolase domain. The Nudix box motif lies at 38–59 (GGIKFGETPEQAMYRELEEEVG). Residues 158–194 (PTQHVPPQHNTARYLRQTHASRKPDEPSTEKTKPDNE) are disordered. Residues 179–194 (RKPDEPSTEKTKPDNE) are compositionally biased toward basic and acidic residues.

The protein belongs to the Nudix hydrolase family. RppH subfamily. It depends on a divalent metal cation as a cofactor.

In terms of biological role, accelerates the degradation of transcripts by removing pyrophosphate from the 5'-end of triphosphorylated RNA, leading to a more labile monophosphorylated state that can stimulate subsequent ribonuclease cleavage. The chain is RNA pyrophosphohydrolase from Janthinobacterium sp. (strain Marseille) (Minibacterium massiliensis).